The sequence spans 143 residues: SsrA-binding protein (143 aa).

The protein belongs to the SmpB family.

Its subcellular location is the cytoplasm. Functionally, required for rescue of stalled ribosomes mediated by trans-translation. Binds to transfer-messenger RNA (tmRNA), required for stable association of tmRNA with ribosomes. tmRNA and SmpB together mimic tRNA shape, replacing the anticodon stem-loop with SmpB. tmRNA is encoded by the ssrA gene; the 2 termini fold to resemble tRNA(Ala) and it encodes a 'tag peptide', a short internal open reading frame. During trans-translation Ala-aminoacylated tmRNA acts like a tRNA, entering the A-site of stalled ribosomes, displacing the stalled mRNA. The ribosome then switches to translate the ORF on the tmRNA; the nascent peptide is terminated with the 'tag peptide' encoded by the tmRNA and targeted for degradation. The ribosome is freed to recommence translation, which seems to be the essential function of trans-translation. The protein is SsrA-binding protein of Deinococcus geothermalis (strain DSM 11300 / CIP 105573 / AG-3a).